We begin with the raw amino-acid sequence, 122 residues long: uncharacterized protein (122 aa).

A signal peptide spans Met1 to Ala33.

This is an uncharacterized protein from Saccharomyces cerevisiae (strain ATCC 204508 / S288c) (Baker's yeast).